Here is a 177-residue protein sequence, read N- to C-terminus: MSYYYETEEVNNNPELKSNFPWLADRIHEGRSSIFHALGYVGLKTENAFGWFLSTERKTISTAKNEVFSSDERKLPGVAYVVVGGMAGNIFARNRIAPARWLITSLSTAATFMFCFPKTSKNIGAFVEKRFPAIRKQRMLVLEQTQKNIQNAQKSMTSAVEGVQKHYENAVKKIKGD.

This is an uncharacterized protein from Schizosaccharomyces pombe (strain 972 / ATCC 24843) (Fission yeast).